Reading from the N-terminus, the 975-residue chain is Glycine dehydrogenase (decarboxylating) (975 aa).

Lys723 is subject to N6-(pyridoxal phosphate)lysine.

This sequence belongs to the GcvP family. In terms of assembly, the glycine cleavage system is composed of four proteins: P, T, L and H. It depends on pyridoxal 5'-phosphate as a cofactor.

The enzyme catalyses N(6)-[(R)-lipoyl]-L-lysyl-[glycine-cleavage complex H protein] + glycine + H(+) = N(6)-[(R)-S(8)-aminomethyldihydrolipoyl]-L-lysyl-[glycine-cleavage complex H protein] + CO2. Its function is as follows. The glycine cleavage system catalyzes the degradation of glycine. The P protein binds the alpha-amino group of glycine through its pyridoxal phosphate cofactor; CO(2) is released and the remaining methylamine moiety is then transferred to the lipoamide cofactor of the H protein. This is Glycine dehydrogenase (decarboxylating) from Burkholderia ambifaria (strain MC40-6).